The following is a 252-amino-acid chain: Phosphate import ATP-binding protein PstB 1 (252 aa).

The region spanning 6–247 (ISSKDLHLYY…PKEKQTEDYI (242 aa)) is the ABC transporter domain. 38-45 (GPSGCGKS) provides a ligand contact to ATP.

It belongs to the ABC transporter superfamily. Phosphate importer (TC 3.A.1.7) family. As to quaternary structure, the complex is composed of two ATP-binding proteins (PstB), two transmembrane proteins (PstC and PstA) and a solute-binding protein (PstS).

It is found in the cell membrane. It catalyses the reaction phosphate(out) + ATP + H2O = ADP + 2 phosphate(in) + H(+). Its function is as follows. Part of the ABC transporter complex PstSACB involved in phosphate import. Responsible for energy coupling to the transport system. The sequence is that of Phosphate import ATP-binding protein PstB 1 from Enterococcus faecalis (strain ATCC 700802 / V583).